The chain runs to 699 residues: DNA topoisomerase 1 (699 aa).

Composition is skewed to basic and acidic residues over residues Met1–Leu15 and Ile22–Gly35. A disordered region spans residues Met1–Lys37. One can recognise a Toprim domain in the interval Lys38–Glu146. Residues Glu44 and Asp115 each coordinate Mg(2+). Residues Asp160 to Leu583 enclose the Topo IA-type catalytic domain. Residues Ser194–Gln199 form an interaction with DNA region. Residue Tyr324 is the O-(5'-phospho-DNA)-tyrosine intermediate of the active site. The C4-type zinc-finger motif lies at Cys601–Cys624. The interval Gln649–Lys699 is disordered. Polar residues predominate over residues Val661–Asn672. Residues Lys674–Gly683 show a composition bias toward basic residues. Residues Ser684–Lys699 show a composition bias toward low complexity.

It belongs to the type IA topoisomerase family. Monomer. Mg(2+) serves as cofactor.

It catalyses the reaction ATP-independent breakage of single-stranded DNA, followed by passage and rejoining.. Functionally, releases the supercoiling and torsional tension of DNA, which is introduced during the DNA replication and transcription, by transiently cleaving and rejoining one strand of the DNA duplex. Introduces a single-strand break via transesterification at a target site in duplex DNA. The scissile phosphodiester is attacked by the catalytic tyrosine of the enzyme, resulting in the formation of a DNA-(5'-phosphotyrosyl)-enzyme intermediate and the expulsion of a 3'-OH DNA strand. The free DNA strand then undergoes passage around the unbroken strand, thus removing DNA supercoils. Finally, in the religation step, the DNA 3'-OH attacks the covalent intermediate to expel the active-site tyrosine and restore the DNA phosphodiester backbone. This is DNA topoisomerase 1 from Fervidobacterium islandicum.